The following is a 468-amino-acid chain: Ribulose bisphosphate carboxylase large chain (468 aa).

Position 5 is an N6,N6,N6-trimethyllysine (Lys5). Asn114 and Thr164 together coordinate substrate. Lys166 acts as the Proton acceptor in catalysis. A substrate-binding site is contributed by Lys168. Lys192, Asp194, and Glu195 together coordinate Mg(2+). Residue Lys192 is modified to N6-carboxylysine. Catalysis depends on His285, which acts as the Proton acceptor. Substrate contacts are provided by Arg286, His318, and Ser370.

The protein belongs to the RuBisCO large chain family. Type I subfamily. In terms of assembly, heterohexadecamer of 8 large chains and 8 small chains; disulfide-linked. The disulfide link is formed within the large subunit homodimers. Mg(2+) is required as a cofactor. In terms of processing, the disulfide bond which can form in the large chain dimeric partners within the hexadecamer appears to be associated with oxidative stress and protein turnover.

The protein resides in the plastid. Its subcellular location is the chloroplast. It catalyses the reaction 2 (2R)-3-phosphoglycerate + 2 H(+) = D-ribulose 1,5-bisphosphate + CO2 + H2O. The enzyme catalyses D-ribulose 1,5-bisphosphate + O2 = 2-phosphoglycolate + (2R)-3-phosphoglycerate + 2 H(+). Functionally, ruBisCO catalyzes two reactions: the carboxylation of D-ribulose 1,5-bisphosphate, the primary event in carbon dioxide fixation, as well as the oxidative fragmentation of the pentose substrate in the photorespiration process. Both reactions occur simultaneously and in competition at the same active site. This is Ribulose bisphosphate carboxylase large chain from Anthospermum herbaceum.